The primary structure comprises 466 residues: Glutamyl-tRNA reductase (466 aa).

Substrate is bound by residues 47 to 50, Ser107, 112 to 114, and Gln118; these read TCNR and EQQ. Cys48 (nucleophile) is an active-site residue. NADP(+) is bound at residue 194-199; that stretch reads GAGAMS.

It belongs to the glutamyl-tRNA reductase family. As to quaternary structure, homodimer.

The enzyme catalyses (S)-4-amino-5-oxopentanoate + tRNA(Glu) + NADP(+) = L-glutamyl-tRNA(Glu) + NADPH + H(+). The protein operates within porphyrin-containing compound metabolism; protoporphyrin-IX biosynthesis; 5-aminolevulinate from L-glutamyl-tRNA(Glu): step 1/2. Its function is as follows. Catalyzes the NADPH-dependent reduction of glutamyl-tRNA(Glu) to glutamate 1-semialdehyde (GSA). This chain is Glutamyl-tRNA reductase, found in Corynebacterium efficiens (strain DSM 44549 / YS-314 / AJ 12310 / JCM 11189 / NBRC 100395).